Consider the following 77-residue polypeptide: Putative defensin-like protein 158 (77 aa).

A signal peptide spans 1–24; it reads MANISWSHFLILMLVFSVVKKGKG. 4 disulfide bridges follow: Cys31/Cys77, Cys41/Cys60, Cys46/Cys71, and Cys50/Cys73.

It belongs to the DEFL family.

Its subcellular location is the secreted. The polypeptide is Putative defensin-like protein 158 (LCR23) (Arabidopsis thaliana (Mouse-ear cress)).